Reading from the N-terminus, the 693-residue chain is Kinesin-like protein KIFC1 (693 aa).

2 disordered regions span residues 1–24 (MRGR…VRTT) and 48–156 (VKSS…KRPA). Composition is skewed to low complexity over residues 49-59 (KSSSRLPLPGS) and 127-138 (QKPAPAAPAQKP). A phosphoserine mark is found at serine 52 and serine 59. The stretch at 165-334 (DLHEELKQYR…QELKGNIRVF (170 aa)) forms a coiled coil. A Kinesin motor domain is found at 330 to 683 (NIRVFCRVRP…LRFASKVNQC (354 aa)). Threonine 379 carries the phosphothreonine modification. 430 to 437 (GQTGSGKT) serves as a coordination point for ATP.

Belongs to the TRAFAC class myosin-kinesin ATPase superfamily. Kinesin family. NCD subfamily. In terms of assembly, binds NUBP1 and NUBP2. Interacts with PPP1R42.

The protein resides in the nucleus. Its subcellular location is the cytoplasm. It is found in the cytoskeleton. The protein localises to the microtubule organizing center. It localises to the centrosome. The protein resides in the spindle. Its subcellular location is the early endosome. Its function is as follows. Minus end-directed microtubule-dependent motor required for bipolar spindle formation. May contribute to movement of early endocytic vesicles. Regulates cilium formation and structure. The chain is Kinesin-like protein KIFC1 from Rattus norvegicus (Rat).